The following is a 286-amino-acid chain: Pantothenate synthetase (286 aa).

30–37 (MGFLHEGH) is a binding site for ATP. The Proton donor role is filled by histidine 37. Glutamine 61 provides a ligand contact to (R)-pantoate. Glutamine 61 lines the beta-alanine pocket. ATP is bound at residue 147–150 (GLKD). Glutamine 153 is a binding site for (R)-pantoate. Residues valine 176 and 184–187 (KSSR) each bind ATP.

This sequence belongs to the pantothenate synthetase family. In terms of assembly, homodimer.

The protein localises to the cytoplasm. The catalysed reaction is (R)-pantoate + beta-alanine + ATP = (R)-pantothenate + AMP + diphosphate + H(+). Its pathway is cofactor biosynthesis; (R)-pantothenate biosynthesis; (R)-pantothenate from (R)-pantoate and beta-alanine: step 1/1. Catalyzes the condensation of pantoate with beta-alanine in an ATP-dependent reaction via a pantoyl-adenylate intermediate. The protein is Pantothenate synthetase of Bacillus subtilis (strain 168).